Consider the following 348-residue polypeptide: MSGLSHLESEGCRNLLGLLDNDEIMALCDTVTNRLVQPVDRQDAIHAILVYSQNVEELLRRKKVHREVIFKYLAKQGVVVPPTAEKHNLIQYAKDYWAKQSPKLKDTAEPVTKTEDIQLFKQQAKEDKEAEKVDFRRLGEEFCHWFFELLNSQNPFLGPPQDDWGPQHFWHDAKLRFYYNTSEQNTTDYQGAEIVSLRLLSLVKEEFLFLSPNLDSQGLKCASSPHGLVMVGVAGTVHRGNSCLGIFEQIFGLIRSPFVENTWKIKFINLRIIGGSSLAPESVLKPSVTFEPSDLEAFYNVITLCNSPEVRPNVRQIIDSGTGDQVLHSGDEALLNKREMNLLTPLKH.

Functionally, may be involved in apoptosis regulation. This is an uncharacterized protein from Mus musculus (Mouse).